A 70-amino-acid chain; its full sequence is Melittin (70 aa).

The N-terminal stretch at 1–21 (MKFLVNVALVFMVVYISFIYA) is a signal peptide. Positions 22–43 (APEPEPAPEAEAEADAEADPEA) are cleaved as a propeptide — removed by a dipeptidylpeptidase. Gly44 is subject to N-formylglycine; partial. At Gln69 the chain carries Glutamine amide.

This sequence belongs to the melittin family. As to quaternary structure, monomer (in solution and for integration into membranes), homotetramer (in solution and potentially as a toroidal pore in membranes), and potenially homomultimer (as a toroidal pore in membranes). As to expression, expressed by the venom gland.

It is found in the secreted. The protein resides in the target cell membrane. Functionally, main toxin of bee venom with strong hemolytic activity and antimicrobial activity. It has enhancing effects on bee venom phospholipase A2 activity. This amphipathic toxin binds to negatively charged membrane surface and forms pore by inserting into lipid bilayers inducing the leakage of ions and molecules and the enhancement of permeability that ultimately leads to cell lysis. It acts as a voltage-gated pore with higher selectivity for anions over cations. The ion conductance has been shown to be voltage-dependent. Self-association of melittin in membranes is promoted by high ionic strength, but not by the presence of negatively charged lipids. In vivo, intradermal injection into healthy human volunteers produce sharp pain sensation and an inflammatory response. It produces pain by activating primary nociceptor cells directly and indirectly due to its ability to activate plasma membrane phospholipase A2 and its pore-forming activity. The polypeptide is Melittin (MELT) (Polistes hebraeus (Paper wasp)).